A 192-amino-acid polypeptide reads, in one-letter code: Fe/S biogenesis protein NfuA (192 aa).

Cysteine 149 and cysteine 152 together coordinate [4Fe-4S] cluster.

This sequence belongs to the NfuA family. As to quaternary structure, homodimer. The cofactor is [4Fe-4S] cluster.

Its function is as follows. Involved in iron-sulfur cluster biogenesis. Binds a 4Fe-4S cluster, can transfer this cluster to apoproteins, and thereby intervenes in the maturation of Fe/S proteins. Could also act as a scaffold/chaperone for damaged Fe/S proteins. This is Fe/S biogenesis protein NfuA from Pseudoalteromonas atlantica (strain T6c / ATCC BAA-1087).